The sequence spans 516 residues: Probable cytosol aminopeptidase (516 aa).

Residues lysine 288 and aspartate 293 each coordinate Mn(2+). Lysine 300 is a catalytic residue. Mn(2+) contacts are provided by aspartate 311, aspartate 370, and glutamate 372. The active site involves arginine 374.

It belongs to the peptidase M17 family. It depends on Mn(2+) as a cofactor.

It is found in the cytoplasm. The catalysed reaction is Release of an N-terminal amino acid, Xaa-|-Yaa-, in which Xaa is preferably Leu, but may be other amino acids including Pro although not Arg or Lys, and Yaa may be Pro. Amino acid amides and methyl esters are also readily hydrolyzed, but rates on arylamides are exceedingly low.. It carries out the reaction Release of an N-terminal amino acid, preferentially leucine, but not glutamic or aspartic acids.. In terms of biological role, presumably involved in the processing and regular turnover of intracellular proteins. Catalyzes the removal of unsubstituted N-terminal amino acids from various peptides. The polypeptide is Probable cytosol aminopeptidase (Cupriavidus taiwanensis (strain DSM 17343 / BCRC 17206 / CCUG 44338 / CIP 107171 / LMG 19424 / R1) (Ralstonia taiwanensis (strain LMG 19424))).